The following is a 1213-amino-acid chain: DNA-directed RNA polymerase subunit beta' (1213 aa).

Zn(2+) contacts are provided by Cys-60, Cys-62, Cys-75, and Cys-78. Residues Asp-450, Asp-452, and Asp-454 each contribute to the Mg(2+) site. Zn(2+)-binding residues include Cys-819, Cys-893, Cys-900, and Cys-903.

This sequence belongs to the RNA polymerase beta' chain family. The RNAP catalytic core consists of 2 alpha, 1 beta, 1 beta' and 1 omega subunit. When a sigma factor is associated with the core the holoenzyme is formed, which can initiate transcription. Requires Mg(2+) as cofactor. Zn(2+) is required as a cofactor.

The enzyme catalyses RNA(n) + a ribonucleoside 5'-triphosphate = RNA(n+1) + diphosphate. In terms of biological role, DNA-dependent RNA polymerase catalyzes the transcription of DNA into RNA using the four ribonucleoside triphosphates as substrates. This chain is DNA-directed RNA polymerase subunit beta', found in Streptococcus pyogenes serotype M4 (strain MGAS10750).